Reading from the N-terminus, the 614-residue chain is Putative Na(+)/H(+) antiporter YjbQ (614 aa).

The next 13 helical transmembrane spans lie at 3–23, 32–52, 57–77, 107–127, 130–150, 163–183, 193–213, 225–244, 248–267, 282–302, 307–327, 338–358, and 368–388; these read HTSV…PILL, VVVA…NLVV, WLQT…GLEI, IFVG…LAGF, NAFL…VPTL, IILL…AVFS, MWLL…GRVF, GTIQ…LVAL, LGAE…SLLS, GFLI…WTLF, ILIM…IPVM, IFAS…AATI, and NMSG…PICF. Residues 401–519 form the RCK N-terminal domain; sequence KKTITFIGAN…EQGISIFSIL (119 aa). The RCK C-terminal domain maps to 533-614; it reads PGVMKLLTNQ…VTDLKKTLEG (82 aa).

The protein belongs to the monovalent cation:proton antiporter 2 (CPA2) transporter (TC 2.A.37) family.

Its subcellular location is the cell membrane. Binds cyclic di-AMP (c-di-AMP), which may regulate the transporter activity. Functionally, probable Na(+)/H(+) antiporter. This Bacillus subtilis (strain 168) protein is Putative Na(+)/H(+) antiporter YjbQ.